Consider the following 440-residue polypeptide: Argininosuccinate lyase (440 aa).

This sequence belongs to the lyase 1 family. Argininosuccinate lyase subfamily.

Its subcellular location is the cytoplasm. The enzyme catalyses 2-(N(omega)-L-arginino)succinate = fumarate + L-arginine. It functions in the pathway amino-acid biosynthesis; L-arginine biosynthesis; L-arginine from L-ornithine and carbamoyl phosphate: step 3/3. This chain is Argininosuccinate lyase, found in Clostridium botulinum (strain Langeland / NCTC 10281 / Type F).